Here is a 93-residue protein sequence, read N- to C-terminus: MADITDIKTILYTEKSLNLQEQGVVVIQTSPKMTKTGLKAVLKEYFGVTPKSINSLRMDGKVKRFRGRLGQRNDYKKFYVKLPEGVSLENAEA.

It belongs to the universal ribosomal protein uL23 family. As to quaternary structure, part of the 50S ribosomal subunit. Contacts protein L29, and trigger factor when it is bound to the ribosome.

Functionally, one of the early assembly proteins it binds 23S rRNA. One of the proteins that surrounds the polypeptide exit tunnel on the outside of the ribosome. Forms the main docking site for trigger factor binding to the ribosome. This Campylobacter jejuni subsp. doylei (strain ATCC BAA-1458 / RM4099 / 269.97) protein is Large ribosomal subunit protein uL23.